The primary structure comprises 69 residues: Calcium-binding protein (69 aa).

EF-hand domains are found at residues 2 to 37 and 38 to 69; these read VNRTEAAQLLKHLDRDKSGKISSQELMEFLHTVNCP and FKKEQVEKFIKQHDKDGDGQLNTDELLDVLCS. Residues aspartate 15, aspartate 17, serine 19, lysine 21, glutamate 26, aspartate 51, aspartate 53, aspartate 55, glutamine 57, and glutamate 62 each coordinate Ca(2+).

The sequence is that of Calcium-binding protein from Schistosoma mansoni (Blood fluke).